The following is a 144-amino-acid chain: Large ribosomal subunit protein uL16c (144 aa).

The protein belongs to the universal ribosomal protein uL16 family. Part of the 50S ribosomal subunit.

The protein resides in the plastid. The protein localises to the chloroplast. The sequence is that of Large ribosomal subunit protein uL16c from Chara vulgaris (Common stonewort).